The chain runs to 218 residues: Adenylate kinase (218 aa).

10 to 15 (GAGKGT) contributes to the ATP binding site. Positions 30–59 (STGDMLRAAVKAATPLGLAAKKIMDEGGLV) are NMP. AMP contacts are provided by residues Thr-31, Arg-36, 57–59 (GLV), 85–88 (GFPR), and Gln-92. The segment at 122 to 159 (GRRVHLASGRTYHVTFNPPAVPDKDDLTGEPLVQRNDD) is LID. ATP contacts are provided by residues Arg-123 and 132-133 (TY). AMP contacts are provided by Arg-156 and Arg-167. Position 203 (Gly-203) interacts with ATP.

Belongs to the adenylate kinase family. In terms of assembly, monomer.

It localises to the cytoplasm. The catalysed reaction is AMP + ATP = 2 ADP. It participates in purine metabolism; AMP biosynthesis via salvage pathway; AMP from ADP: step 1/1. Functionally, catalyzes the reversible transfer of the terminal phosphate group between ATP and AMP. Plays an important role in cellular energy homeostasis and in adenine nucleotide metabolism. The sequence is that of Adenylate kinase from Chlorobaculum tepidum (strain ATCC 49652 / DSM 12025 / NBRC 103806 / TLS) (Chlorobium tepidum).